A 261-amino-acid chain; its full sequence is Claudin-18 (261 aa).

Over 1–6 the chain is Cytoplasmic; the sequence is MSTTTC. A helical transmembrane segment spans residues 7–27; that stretch reads QVVAFLLSILGLAGCIAATGM. The Extracellular segment spans residues 28 to 80; sequence DMWSTQDLYDNPVTSVFQYEGLWRSCVRQSSGFTECRPYFTILGLPAMLQAVR. A helical transmembrane segment spans residues 81 to 101; the sequence is ALMIVGIVLGAIGLLVSIFAL. Residues 102-122 are Cytoplasmic-facing; sequence KCIRIGSMEDSAKANMTLTSG. Residues 123–143 traverse the membrane as a helical segment; sequence IMFIVSGLCAIAGVSVFANML. Over 144–174 the chain is Extracellular; it reads VTNFWMSTANMYTGMGGMVQTVQTRYTFGAA. Residues 175–195 form a helical membrane-spanning segment; sequence LFVGWVAGGLTLIGGVMMCIA. The segment at 195–261 is required for role in regulation of RANKL-induced osteoclast differentiation; it reads ACRGLAPEET…QSYPSKHDYV (67 aa). Over 196–261 the chain is Cytoplasmic; that stretch reads CRGLAPEETN…QSYPSKHDYV (66 aa). Phosphoserine is present on Ser-214. The tract at residues 242 to 261 is disordered; that stretch reads DGGARTEDEVQSYPSKHDYV.

The protein belongs to the claudin family. Interacts with TJP2/ZO-2. Interacts with TJP1/ZO-1. Interacts with YAP1 (phosphorylated); the interaction sequesters YAP1 away from the nucleus and thereby restricts transcription of YAP1 target genes. As to quaternary structure, interacts with CLDN19. As to expression, expression is restricted to the lung. In terms of tissue distribution, expression is restricted to the stomach mucosa where it is predominantly observed in the epithelial cells of the pit region and the base of the gastric glands including exocrine and endocrine cells (at protein level).

The protein resides in the cell junction. It localises to the tight junction. It is found in the cell membrane. Its subcellular location is the lateral cell membrane. In terms of biological role, involved in alveolar fluid homeostasis via regulation of alveolar epithelial tight junction composition and therefore ion transport and solute permeability, potentially via downstream regulation of the actin cytoskeleton organization and beta-2-adrenergic signaling. Required for lung alveolarization and maintenance of the paracellular alveolar epithelial barrier. Acts to maintain epithelial progenitor cell proliferation and organ size, via regulation of YAP1 localization away from the nucleus and thereby restriction of YAP1 target gene transcription. Acts as a negative regulator of RANKL-induced osteoclast differentiation, potentially via relocation of TJP2/ZO-2 away from the nucleus, subsequently involved in bone resorption in response to calcium deficiency. Mediates the osteoprotective effects of estrogen, potentially via acting downstream of estrogen signaling independently of RANKL signaling pathways. Its function is as follows. Involved in the maintenance of homeostasis of the alveolar microenvironment via regulation of pH and subsequent T-cell activation in the alveolar space, is therefore indirectly involved in limiting C.neoformans infection. Functionally, required for the formation of the gastric paracellular barrier via its role in tight junction formation, thereby involved in the response to gastric acidification. This Homo sapiens (Human) protein is Claudin-18 (CLDN18).